The sequence spans 111 residues: Putative pterin-4-alpha-carbinolamine dehydratase (111 aa).

This sequence belongs to the pterin-4-alpha-carbinolamine dehydratase family.

The catalysed reaction is (4aS,6R)-4a-hydroxy-L-erythro-5,6,7,8-tetrahydrobiopterin = (6R)-L-erythro-6,7-dihydrobiopterin + H2O. The chain is Putative pterin-4-alpha-carbinolamine dehydratase from Alkaliphilus metalliredigens (strain QYMF).